The following is a 154-amino-acid chain: Ascorbate-specific PTS system EIIA component (154 aa).

The PTS EIIA type-2 domain occupies 6-150; it reads SLAENKSIRL…QEVLDLIDRT (145 aa). Catalysis depends on His68, which acts as the Tele-phosphohistidine intermediate. Residue His68 is modified to Phosphohistidine.

It localises to the cytoplasm. Functionally, the phosphoenolpyruvate-dependent sugar phosphotransferase system (sugar PTS), a major carbohydrate active transport system, catalyzes the phosphorylation of incoming sugar substrates concomitantly with their translocation across the cell membrane. The enzyme II UlaABC PTS system is involved in ascorbate transport. This is Ascorbate-specific PTS system EIIA component (ulaC) from Escherichia coli O157:H7.